We begin with the raw amino-acid sequence, 510 residues long: NAD(P)H-quinone oxidoreductase subunit 2, chloroplastic (510 aa).

12 consecutive transmembrane segments (helical) span residues 24–44 (LLLF…GLIL), 59–79 (WFYF…LFRW), 99–119 (IFQF…VEYI), 124–144 (MAIT…MFLC), 149–169 (LITI…LSGY), 183–203 (YLLM…WLYG), 229–249 (ISIA…PAPF), 295–315 (WHLL…LIAI), 323–343 (MLAY…IVGD), 354–374 (YMLF…LFGL), 395–415 (ALSS…AGFF), and 418–438 (LYLF…IGLL).

The protein belongs to the complex I subunit 2 family. As to quaternary structure, NDH is composed of at least 16 different subunits, 5 of which are encoded in the nucleus.

Its subcellular location is the plastid. It is found in the chloroplast thylakoid membrane. It carries out the reaction a plastoquinone + NADH + (n+1) H(+)(in) = a plastoquinol + NAD(+) + n H(+)(out). The enzyme catalyses a plastoquinone + NADPH + (n+1) H(+)(in) = a plastoquinol + NADP(+) + n H(+)(out). In terms of biological role, NDH shuttles electrons from NAD(P)H:plastoquinone, via FMN and iron-sulfur (Fe-S) centers, to quinones in the photosynthetic chain and possibly in a chloroplast respiratory chain. The immediate electron acceptor for the enzyme in this species is believed to be plastoquinone. Couples the redox reaction to proton translocation, and thus conserves the redox energy in a proton gradient. The polypeptide is NAD(P)H-quinone oxidoreductase subunit 2, chloroplastic (Ananas comosus (Pineapple)).